A 55-amino-acid chain; its full sequence is Large ribosomal subunit protein bL33 (55 aa).

It belongs to the bacterial ribosomal protein bL33 family.

The chain is Large ribosomal subunit protein bL33 from Leifsonia xyli subsp. xyli (strain CTCB07).